Consider the following 62-residue polypeptide: Small ribosomal subunit protein bS21 (62 aa).

The interval 38–62 is disordered; it reads YEKPSERRKRKMNAAVRKNRRTRHG.

It belongs to the bacterial ribosomal protein bS21 family.

The chain is Small ribosomal subunit protein bS21 from Gemmatimonas aurantiaca (strain DSM 14586 / JCM 11422 / NBRC 100505 / T-27).